A 218-amino-acid polypeptide reads, in one-letter code: Deoxyribose-phosphate aldolase (218 aa).

Asp-92 serves as the catalytic Proton donor/acceptor. Lys-156 (schiff-base intermediate with acetaldehyde) is an active-site residue. The active-site Proton donor/acceptor is Lys-185.

It belongs to the DeoC/FbaB aldolase family. DeoC type 1 subfamily.

The protein localises to the cytoplasm. The catalysed reaction is 2-deoxy-D-ribose 5-phosphate = D-glyceraldehyde 3-phosphate + acetaldehyde. It participates in carbohydrate degradation; 2-deoxy-D-ribose 1-phosphate degradation; D-glyceraldehyde 3-phosphate and acetaldehyde from 2-deoxy-alpha-D-ribose 1-phosphate: step 2/2. In terms of biological role, catalyzes a reversible aldol reaction between acetaldehyde and D-glyceraldehyde 3-phosphate to generate 2-deoxy-D-ribose 5-phosphate. This chain is Deoxyribose-phosphate aldolase, found in Desulfitobacterium hafniense (strain Y51).